The following is a 645-amino-acid chain: Glucans biosynthesis glucosyltransferase H (645 aa).

The interval 1–28 (MDGTVTLSPAPTDLPPVSSLDAGQPTLP) is disordered. 7 consecutive transmembrane segments (helical) span residues 64-84 (LIGG…SVLW), 98-118 (LFVL…AGFI), 423-443 (APMW…GAGI), 465-485 (AIWI…LGYI), 504-524 (ALSI…VMYL), 558-578 (SYGG…LVSP), and 580-600 (LAAW…VVAV).

The protein belongs to the glycosyltransferase 2 family. OpgH subfamily.

The protein localises to the cell inner membrane. It participates in glycan metabolism; osmoregulated periplasmic glucan (OPG) biosynthesis. Its function is as follows. Involved in the biosynthesis of osmoregulated periplasmic glucans (OPGs). This Xanthomonas campestris pv. campestris (strain 8004) protein is Glucans biosynthesis glucosyltransferase H.